Here is a 457-residue protein sequence, read N- to C-terminus: Multidrug resistance protein MdtK (457 aa).

A run of 12 helical transmembrane segments spans residues 11–31, 53–73, 93–113, 127–147, 160–180, 191–211, 243–263, 276–296, 316–336, 357–377, 387–407, and 418–438; these read LLAL…MGFV, IWLP…PVVA, WLAG…GYII, AVGY…FQVA, GMVM…IFIY, VGCG…MLWW, LPIA…ALLV, IALN…AAVT, RTGV…TVLM, LMLL…GSGI, IFFI…YLLA, and PAGF…MMML.

This sequence belongs to the multi antimicrobial extrusion (MATE) (TC 2.A.66.1) family. MdtK subfamily.

The protein localises to the cell inner membrane. Functionally, multidrug efflux pump that functions probably as a Na(+)/drug antiporter. In Klebsiella pneumoniae subsp. pneumoniae (strain ATCC 700721 / MGH 78578), this protein is Multidrug resistance protein MdtK.